Consider the following 131-residue polypeptide: Small ribosomal subunit protein bS6 (131 aa).

The tract at residues 98-131 is disordered; that stretch reads EASPMVKAKDERRERREDFANETSEETEAGDSEE. The span at 104 to 116 shows a compositional bias: basic and acidic residues; the sequence is KAKDERRERREDF. The span at 120 to 131 shows a compositional bias: acidic residues; that stretch reads TSEETEAGDSEE.

It belongs to the bacterial ribosomal protein bS6 family.

Its function is as follows. Binds together with bS18 to 16S ribosomal RNA. This Edwardsiella ictaluri (strain 93-146) protein is Small ribosomal subunit protein bS6.